Here is a 494-residue protein sequence, read N- to C-terminus: Glycerol kinase (494 aa).

Threonine 13 contributes to the ADP binding site. 3 residues coordinate ATP: threonine 13, threonine 14, and serine 15. Threonine 13 lines the sn-glycerol 3-phosphate pocket. Arginine 17 contacts ADP. Residues arginine 83, glutamate 84, tyrosine 135, and aspartate 244 each coordinate sn-glycerol 3-phosphate. Positions 83, 84, 135, 244, and 245 each coordinate glycerol. The ADP site is built by threonine 266 and glycine 309. Residues threonine 266, glycine 309, glutamine 313, and glycine 410 each coordinate ATP. Glycine 410 and asparagine 414 together coordinate ADP.

It belongs to the FGGY kinase family.

The enzyme catalyses glycerol + ATP = sn-glycerol 3-phosphate + ADP + H(+). Its pathway is polyol metabolism; glycerol degradation via glycerol kinase pathway; sn-glycerol 3-phosphate from glycerol: step 1/1. Inhibited by fructose 1,6-bisphosphate (FBP). Key enzyme in the regulation of glycerol uptake and metabolism. Catalyzes the phosphorylation of glycerol to yield sn-glycerol 3-phosphate. In Shewanella putrefaciens (strain CN-32 / ATCC BAA-453), this protein is Glycerol kinase.